A 197-amino-acid polypeptide reads, in one-letter code: Nucleoside triphosphate pyrophosphatase (197 aa).

Residue aspartate 71 is the Proton acceptor of the active site.

The protein belongs to the Maf family. It depends on a divalent metal cation as a cofactor.

Its subcellular location is the cytoplasm. The enzyme catalyses a ribonucleoside 5'-triphosphate + H2O = a ribonucleoside 5'-phosphate + diphosphate + H(+). It carries out the reaction a 2'-deoxyribonucleoside 5'-triphosphate + H2O = a 2'-deoxyribonucleoside 5'-phosphate + diphosphate + H(+). Nucleoside triphosphate pyrophosphatase. May have a dual role in cell division arrest and in preventing the incorporation of modified nucleotides into cellular nucleic acids. The protein is Nucleoside triphosphate pyrophosphatase of Nostoc punctiforme (strain ATCC 29133 / PCC 73102).